Reading from the N-terminus, the 654-residue chain is NADH-ubiquinone oxidoreductase chain 5 (654 aa).

16 helical membrane-spanning segments follow: residues 1–21, 30–50, 76–96, 113–133, 135–155, 178–198, 200–220, 241–261, 274–294, 301–320, 324–346, 365–385, 406–426, 451–471, 510–530, and 612–632; these read MYLA…FLGR, LITC…FYEV, FIYD…SALV, FFAY…GDNY, VMFI…NFWF, FSIG…TTVF, LAPF…LVAA, TPVS…YLLL, LILI…TGLL, VIAY…CGLS, VALF…AGSV, LLPF…ALPF, SGNL…MYSI, PLIM…FGYV, FLPL…YWIF, and TYAM…FFIG.

It belongs to the complex I subunit 5 family.

It localises to the mitochondrion inner membrane. It carries out the reaction a ubiquinone + NADH + 5 H(+)(in) = a ubiquinol + NAD(+) + 4 H(+)(out). Functionally, core subunit of the mitochondrial membrane respiratory chain NADH dehydrogenase (Complex I) that is believed to belong to the minimal assembly required for catalysis. Complex I functions in the transfer of electrons from NADH to the respiratory chain. The immediate electron acceptor for the enzyme is believed to be ubiquinone. In Rhizopus stolonifer (Rhizopus nigricans), this protein is NADH-ubiquinone oxidoreductase chain 5 (ND5).